The sequence spans 204 residues: Urease accessory protein UreG (204 aa).

Position 12–19 (12–19 (GPVGSGKT)) interacts with GTP.

Belongs to the SIMIBI class G3E GTPase family. UreG subfamily. Homodimer. UreD, UreF and UreG form a complex that acts as a GTP-hydrolysis-dependent molecular chaperone, activating the urease apoprotein by helping to assemble the nickel containing metallocenter of UreC. The UreE protein probably delivers the nickel.

Its subcellular location is the cytoplasm. Its function is as follows. Facilitates the functional incorporation of the urease nickel metallocenter. This process requires GTP hydrolysis, probably effectuated by UreG. In Pseudomonas fluorescens (strain ATCC BAA-477 / NRRL B-23932 / Pf-5), this protein is Urease accessory protein UreG.